The primary structure comprises 229 residues: Ribosome maturation factor RimM (229 aa).

The region spanning 148–229 (ADEFYWVDLI…RVVVDWEADY (82 aa)) is the PRC barrel domain.

Belongs to the RimM family. In terms of assembly, binds ribosomal protein uS19.

Its subcellular location is the cytoplasm. An accessory protein needed during the final step in the assembly of 30S ribosomal subunit, possibly for assembly of the head region. Essential for efficient processing of 16S rRNA. May be needed both before and after RbfA during the maturation of 16S rRNA. It has affinity for free ribosomal 30S subunits but not for 70S ribosomes. The chain is Ribosome maturation factor RimM from Burkholderia pseudomallei (strain 1710b).